A 382-amino-acid polypeptide reads, in one-letter code: UDP-4-amino-4-deoxy-L-arabinose--oxoglutarate aminotransferase (382 aa).

Lys183 is modified (N6-(pyridoxal phosphate)lysine).

This sequence belongs to the DegT/DnrJ/EryC1 family. ArnB subfamily. As to quaternary structure, homodimer. The cofactor is pyridoxal 5'-phosphate.

It catalyses the reaction UDP-4-amino-4-deoxy-beta-L-arabinose + 2-oxoglutarate = UDP-beta-L-threo-pentopyranos-4-ulose + L-glutamate. The protein operates within nucleotide-sugar biosynthesis; UDP-4-deoxy-4-formamido-beta-L-arabinose biosynthesis; UDP-4-deoxy-4-formamido-beta-L-arabinose from UDP-alpha-D-glucuronate: step 2/3. It functions in the pathway bacterial outer membrane biogenesis; lipopolysaccharide biosynthesis. Its function is as follows. Catalyzes the conversion of UDP-4-keto-arabinose (UDP-Ara4O) to UDP-4-amino-4-deoxy-L-arabinose (UDP-L-Ara4N). The modified arabinose is attached to lipid A and is required for resistance to polymyxin and cationic antimicrobial peptides. This Pseudomonas aeruginosa (strain ATCC 15692 / DSM 22644 / CIP 104116 / JCM 14847 / LMG 12228 / 1C / PRS 101 / PAO1) protein is UDP-4-amino-4-deoxy-L-arabinose--oxoglutarate aminotransferase.